A 270-amino-acid chain; its full sequence is 4-hydroxy-tetrahydrodipicolinate reductase (270 aa).

Residues 11-16 (GCNGRM) and Glu-37 contribute to the NAD(+) site. Arg-38 serves as a coordination point for NADP(+). NAD(+)-binding positions include 101–103 (GTT) and 125–128 (ASNY). His-158 serves as the catalytic Proton donor/acceptor. His-159 contacts (S)-2,3,4,5-tetrahydrodipicolinate. The active-site Proton donor is the Lys-162. 168–169 (GT) contacts (S)-2,3,4,5-tetrahydrodipicolinate.

The protein belongs to the DapB family.

The protein resides in the cytoplasm. The enzyme catalyses (S)-2,3,4,5-tetrahydrodipicolinate + NAD(+) + H2O = (2S,4S)-4-hydroxy-2,3,4,5-tetrahydrodipicolinate + NADH + H(+). It carries out the reaction (S)-2,3,4,5-tetrahydrodipicolinate + NADP(+) + H2O = (2S,4S)-4-hydroxy-2,3,4,5-tetrahydrodipicolinate + NADPH + H(+). It participates in amino-acid biosynthesis; L-lysine biosynthesis via DAP pathway; (S)-tetrahydrodipicolinate from L-aspartate: step 4/4. Functionally, catalyzes the conversion of 4-hydroxy-tetrahydrodipicolinate (HTPA) to tetrahydrodipicolinate. The chain is 4-hydroxy-tetrahydrodipicolinate reductase from Aeromonas salmonicida (strain A449).